The primary structure comprises 471 residues: MPSPIHVIGGGLSGAEAAWQIAKAGIPVILHEMRPDRSTPAHHSADLAELVCSNSFRADDAESSAIGILHREMRRLDSLILQAADCNRLPAGGALAVDRQGFAAFVTAAIKASPLITLVRGEVTEIPADWDQIIIATGPLTSETLAAHIKALTGEDDLAFFDAIAPVVYRDSIDMTKAWFQSRYDKVGPGGNGADYINCPLDKEQYQAFVEGLIQGEKISFKEWEGTPYFNGCLPIEIMAERGPETLRHGPMKPVGLTNAHAPTVKPYAIVQLRQDNALGTLYNMVGFQTKLKHAEQIALFRTIPGLEQARFARLGGLHRNIFLNTPKVLDMRLRLKADPRLRFAGQITGCEGYVESAGIGLLVGRMAACERLGESFVPPPTTTALGALLNHITAGHIETIDAGPRSFQPMNVNFGLFPPLTEKIVSPEGKRLRGPEKDQLKKRLLSQRAERDLEAWCTAPTCGPTPLAAE.

Residue 9–14 (GGGLSG) participates in FAD binding.

The protein belongs to the MnmG family. TrmFO subfamily. The cofactor is FAD.

The protein resides in the cytoplasm. The catalysed reaction is uridine(54) in tRNA + (6R)-5,10-methylene-5,6,7,8-tetrahydrofolate + NADH + H(+) = 5-methyluridine(54) in tRNA + (6S)-5,6,7,8-tetrahydrofolate + NAD(+). It catalyses the reaction uridine(54) in tRNA + (6R)-5,10-methylene-5,6,7,8-tetrahydrofolate + NADPH + H(+) = 5-methyluridine(54) in tRNA + (6S)-5,6,7,8-tetrahydrofolate + NADP(+). In terms of biological role, catalyzes the folate-dependent formation of 5-methyl-uridine at position 54 (M-5-U54) in all tRNAs. In Beijerinckia indica subsp. indica (strain ATCC 9039 / DSM 1715 / NCIMB 8712), this protein is Methylenetetrahydrofolate--tRNA-(uracil-5-)-methyltransferase TrmFO.